We begin with the raw amino-acid sequence, 366 residues long: Alanine racemase (366 aa).

The Proton acceptor; specific for D-alanine role is filled by Lys-40. N6-(pyridoxal phosphate)lysine is present on Lys-40. Arg-136 serves as a coordination point for substrate. The active-site Proton acceptor; specific for L-alanine is Tyr-263. Met-310 is a binding site for substrate.

Belongs to the alanine racemase family. Requires pyridoxal 5'-phosphate as cofactor.

The enzyme catalyses L-alanine = D-alanine. Its pathway is amino-acid biosynthesis; D-alanine biosynthesis; D-alanine from L-alanine: step 1/1. Functionally, catalyzes the interconversion of L-alanine and D-alanine. May also act on other amino acids. The chain is Alanine racemase (alr) from Streptococcus equi subsp. equi (strain 4047).